A 238-amino-acid polypeptide reads, in one-letter code: Thiamine import ATP-binding protein ThiQ (238 aa).

In terms of domain architecture, ABC transporter spans 1 to 234 (MSSTALAVKG…RDIAAINRFL (234 aa)). 36–43 (GASGSGKS) contributes to the ATP binding site.

It belongs to the ABC transporter superfamily. Thiamine importer (TC 3.A.1.19.1) family. In terms of assembly, the complex is composed of two ATP-binding proteins (ThiQ), two transmembrane proteins (ThiP) and a solute-binding protein (ThiB).

It is found in the cell inner membrane. It carries out the reaction thiamine(out) + ATP + H2O = thiamine(in) + ADP + phosphate + H(+). Part of the ABC transporter complex ThiBPQ involved in thiamine import. Responsible for energy coupling to the transport system. This Rhizobium meliloti (strain 1021) (Ensifer meliloti) protein is Thiamine import ATP-binding protein ThiQ.